The chain runs to 137 residues: Small ribosomal subunit protein uS12 (137 aa).

Positions 1–55 are disordered; the sequence is MPTINQLVRKPRKSKTKQSDSPALNRGFNSKKKQFTNLNSPQKRGVCTRVGTMTP. Aspartate 102 is subject to 3-methylthioaspartic acid. A disordered region spans residues 118 to 137; it reads SGVDGRRQGRSLYGTKKPKN.

It belongs to the universal ribosomal protein uS12 family. Part of the 30S ribosomal subunit. Contacts proteins S8 and S17. May interact with IF1 in the 30S initiation complex.

Its function is as follows. With S4 and S5 plays an important role in translational accuracy. Functionally, interacts with and stabilizes bases of the 16S rRNA that are involved in tRNA selection in the A site and with the mRNA backbone. Located at the interface of the 30S and 50S subunits, it traverses the body of the 30S subunit contacting proteins on the other side and probably holding the rRNA structure together. The combined cluster of proteins S8, S12 and S17 appears to hold together the shoulder and platform of the 30S subunit. The sequence is that of Small ribosomal subunit protein uS12 from Staphylococcus epidermidis (strain ATCC 35984 / DSM 28319 / BCRC 17069 / CCUG 31568 / BM 3577 / RP62A).